The sequence spans 179 residues: ATP synthase subunit delta (179 aa).

It belongs to the ATPase delta chain family. As to quaternary structure, F-type ATPases have 2 components, F(1) - the catalytic core - and F(0) - the membrane proton channel. F(1) has five subunits: alpha(3), beta(3), gamma(1), delta(1), epsilon(1). F(0) has three main subunits: a(1), b(2) and c(10-14). The alpha and beta chains form an alternating ring which encloses part of the gamma chain. F(1) is attached to F(0) by a central stalk formed by the gamma and epsilon chains, while a peripheral stalk is formed by the delta and b chains.

Its subcellular location is the cell inner membrane. In terms of biological role, f(1)F(0) ATP synthase produces ATP from ADP in the presence of a proton or sodium gradient. F-type ATPases consist of two structural domains, F(1) containing the extramembraneous catalytic core and F(0) containing the membrane proton channel, linked together by a central stalk and a peripheral stalk. During catalysis, ATP synthesis in the catalytic domain of F(1) is coupled via a rotary mechanism of the central stalk subunits to proton translocation. This protein is part of the stalk that links CF(0) to CF(1). It either transmits conformational changes from CF(0) to CF(1) or is implicated in proton conduction. In Burkholderia mallei (strain NCTC 10247), this protein is ATP synthase subunit delta.